The primary structure comprises 255 residues: F-box/SPRY domain-containing protein 1 (255 aa).

Residues 3–51 enclose the F-box domain; it reads DPVAALCNYNVLEVIFSYLELDDLSHCSQVCKSWYHFLNDENSDVWRWH. Residues 61–253 enclose the B30.2/SPRY domain; it reads LKSDLLASVS…VSMVYLGTPL (193 aa).

The protein belongs to the FBXO45/Fsn family. In terms of assembly, component of an E3 ubiquitin ligase complex composed of hiw and Fsn. Interacts with Rae1, probably as part of the hiw-Fsn complex. Interacts (via B30.2/SPRY domain) with vas. Interacts with Cul1. Expressed in nurse cells and oocytes (at protein level). Expressed in the brain. Expressed in the neuromuscular junction (NMJ).

The protein resides in the cytoplasm. It localises to the nucleus. It is found in the synapse. The protein localises to the cell projection. Its subcellular location is the axon. The protein resides in the perikaryon. It functions in the pathway protein modification; protein ubiquitination. Functionally, required in the presynaptic motoneuron to down-regulate the levels of wnd and restrain synaptic terminal growth at the neuromuscular junction (NMJ). Negatively regulates the localization of vas to the posterior pole of the oocyte. Involved in primordial germ cell formation. This chain is F-box/SPRY domain-containing protein 1 (Fsn), found in Drosophila melanogaster (Fruit fly).